The following is a 458-amino-acid chain: Serine--tRNA ligase (458 aa).

Threonine 255–glutamate 257 contributes to the L-serine binding site. ATP is bound by residues arginine 286 to glutamate 288 and valine 302. Position 309 (glutamate 309) interacts with L-serine. Position 373 to 376 (glutamate 373 to serine 376) interacts with ATP. Position 409 (threonine 409) interacts with L-serine.

It belongs to the class-II aminoacyl-tRNA synthetase family. Type-1 seryl-tRNA synthetase subfamily. Homodimer. The tRNA molecule binds across the dimer.

Its subcellular location is the cytoplasm. The catalysed reaction is tRNA(Ser) + L-serine + ATP = L-seryl-tRNA(Ser) + AMP + diphosphate + H(+). It carries out the reaction tRNA(Sec) + L-serine + ATP = L-seryl-tRNA(Sec) + AMP + diphosphate + H(+). The protein operates within aminoacyl-tRNA biosynthesis; selenocysteinyl-tRNA(Sec) biosynthesis; L-seryl-tRNA(Sec) from L-serine and tRNA(Sec): step 1/1. Its function is as follows. Catalyzes the attachment of serine to tRNA(Ser). Is also able to aminoacylate tRNA(Sec) with serine, to form the misacylated tRNA L-seryl-tRNA(Sec), which will be further converted into selenocysteinyl-tRNA(Sec). In Ignicoccus hospitalis (strain KIN4/I / DSM 18386 / JCM 14125), this protein is Serine--tRNA ligase.